The chain runs to 318 residues: uncharacterized protein (318 aa).

A disordered region spans residues 19–63 (VPPDARHHEPRPGMTDHPDTGNGIGLTGRPPRAIPDPAPRSSHGP). Residues 21 to 37 (PDARHHEPRPGMTDHPD) are compositionally biased toward basic and acidic residues. ATP is bound at residue 72 to 79 (QKGGVGKT).

Belongs to the ParA family.

Functionally, may play a role in septum formation. This is an uncharacterized protein from Mycobacterium tuberculosis (strain CDC 1551 / Oshkosh).